We begin with the raw amino-acid sequence, 360 residues long: UDP-N-acetylglucosamine--N-acetylmuramyl-(pentapeptide) pyrophosphoryl-undecaprenol N-acetylglucosamine transferase (360 aa).

UDP-N-acetyl-alpha-D-glucosamine is bound by residues 12–14 (TAG), serine 198, and glutamine 289.

Belongs to the glycosyltransferase 28 family. MurG subfamily.

It localises to the cell membrane. The enzyme catalyses Mur2Ac(oyl-L-Ala-gamma-D-Glu-L-Lys-D-Ala-D-Ala)-di-trans,octa-cis-undecaprenyl diphosphate + UDP-N-acetyl-alpha-D-glucosamine = beta-D-GlcNAc-(1-&gt;4)-Mur2Ac(oyl-L-Ala-gamma-D-Glu-L-Lys-D-Ala-D-Ala)-di-trans,octa-cis-undecaprenyl diphosphate + UDP + H(+). It functions in the pathway cell wall biogenesis; peptidoglycan biosynthesis. In terms of biological role, cell wall formation. Catalyzes the transfer of a GlcNAc subunit on undecaprenyl-pyrophosphoryl-MurNAc-pentapeptide (lipid intermediate I) to form undecaprenyl-pyrophosphoryl-MurNAc-(pentapeptide)GlcNAc (lipid intermediate II). The protein is UDP-N-acetylglucosamine--N-acetylmuramyl-(pentapeptide) pyrophosphoryl-undecaprenol N-acetylglucosamine transferase of Streptococcus equi subsp. zooepidemicus (strain MGCS10565).